A 562-amino-acid polypeptide reads, in one-letter code: MDYKTQFAESLSNIFTNELTQKQILDLIETPKQDEFGDAAFPCFSLAKQYKKSPAIIAKEVAEKLSDPFFTKVEAVGPYVNVFFNRDTVSDAVLKTILAEKEEYGQNHFGCEKTVVIDYSSPNIAKPFSMGHLRSTMIGNSLKHIAEKCGYEVVGINYIGDWGTQFGKLITAYKKWGNEAVVKEDPIRELFKLYVQFHEEIKDDEELEEEGRAWFKKLEEGDEEAVELWNWFRHESLKEFSRIYELLGVEFTNFQGEAFYNNLMEDFIGILEEHDLLEESEGALVVNLEEEGMPPCLIRKSDGATIYATRDLTAALYRQNTFGFDKALYVVGPEQSLHFNQFFTVLKKLGYTWVDGMEHVPFGFILKDGKKMSTRKGRVILLEEVLEEAIELAKQNIEEKNPNLKQKEEVAKQVGAGAVIFHDLKNERMHNIEFSLENMLKFEGETGPYVQYTHARACSILRKESVEFETCTFTLKDDYSWNIVKLLNKFPEVIEAACNKNEPSVISKYVLDVAQSFNKYYGNVRILDENAEKDSRLALVYAVTVVLKEGLRLLGVEAPEEM.

The 'HIGH' region motif lies at 122 to 132 (PNIAKPFSMGH).

It belongs to the class-I aminoacyl-tRNA synthetase family. As to quaternary structure, monomer.

The protein resides in the cytoplasm. The enzyme catalyses tRNA(Arg) + L-arginine + ATP = L-arginyl-tRNA(Arg) + AMP + diphosphate. The protein is Arginine--tRNA ligase 1 of Bacillus cereus (strain ZK / E33L).